Consider the following 232-residue polypeptide: Large ribosomal subunit protein uL1 (232 aa).

It belongs to the universal ribosomal protein uL1 family. In terms of assembly, part of the 50S ribosomal subunit.

Its function is as follows. Binds directly to 23S rRNA. The L1 stalk is quite mobile in the ribosome, and is involved in E site tRNA release. In terms of biological role, protein L1 is also a translational repressor protein, it controls the translation of the L11 operon by binding to its mRNA. The sequence is that of Large ribosomal subunit protein uL1 from Xylella fastidiosa (strain 9a5c).